Consider the following 143-residue polypeptide: D-aminoacyl-tRNA deacylase (143 aa).

Residues 135-136 (GP) carry the Gly-cisPro motif, important for rejection of L-amino acids motif.

This sequence belongs to the DTD family. In terms of assembly, homodimer.

It localises to the cytoplasm. The catalysed reaction is glycyl-tRNA(Ala) + H2O = tRNA(Ala) + glycine + H(+). The enzyme catalyses a D-aminoacyl-tRNA + H2O = a tRNA + a D-alpha-amino acid + H(+). Its function is as follows. An aminoacyl-tRNA editing enzyme that deacylates mischarged D-aminoacyl-tRNAs. Also deacylates mischarged glycyl-tRNA(Ala), protecting cells against glycine mischarging by AlaRS. Acts via tRNA-based rather than protein-based catalysis; rejects L-amino acids rather than detecting D-amino acids in the active site. By recycling D-aminoacyl-tRNA to D-amino acids and free tRNA molecules, this enzyme counteracts the toxicity associated with the formation of D-aminoacyl-tRNA entities in vivo and helps enforce protein L-homochirality. The chain is D-aminoacyl-tRNA deacylase from Mycolicibacterium gilvum (strain PYR-GCK) (Mycobacterium gilvum (strain PYR-GCK)).